The sequence spans 354 residues: Probable RNA methyltransferase AZOSEA28700 (354 aa).

Glu-88 acts as the Proton acceptor in catalysis. The Radical SAM core domain occupies 91–317 (LLPRDGLCVS…TKLRHSAGQD (227 aa)). A disulfide bridge connects residues Cys-98 and Cys-322. [4Fe-4S] cluster is bound by residues Cys-105, Cys-109, and Cys-112. S-adenosyl-L-methionine is bound by residues 150 to 151 (GE), Ser-180, 203 to 205 (SLH), and Asn-279. The S-methylcysteine intermediate role is filled by Cys-322.

This sequence belongs to the radical SAM superfamily. RlmN family. The cofactor is [4Fe-4S] cluster.

Its subcellular location is the cytoplasm. The sequence is that of Probable RNA methyltransferase AZOSEA28700 from Aromatoleum aromaticum (strain DSM 19018 / LMG 30748 / EbN1) (Azoarcus sp. (strain EbN1)).